A 218-amino-acid polypeptide reads, in one-letter code: UPF0598 protein C8orf82 homolog (218 aa).

It belongs to the UPF0598 family.

This chain is UPF0598 protein C8orf82 homolog, found in Bos taurus (Bovine).